We begin with the raw amino-acid sequence, 364 residues long: Coproporphyrin III ferrochelatase (364 aa).

Fe-coproporphyrin III-binding residues include arginine 29 and tyrosine 118. Fe(2+) contacts are provided by histidine 169 and glutamate 250.

It belongs to the ferrochelatase family.

The protein resides in the cytoplasm. The enzyme catalyses Fe-coproporphyrin III + 2 H(+) = coproporphyrin III + Fe(2+). Its pathway is porphyrin-containing compound metabolism; protoheme biosynthesis. Functionally, involved in coproporphyrin-dependent heme b biosynthesis. Catalyzes the insertion of ferrous iron into coproporphyrin III to form Fe-coproporphyrin III. In Streptococcus pneumoniae (strain Hungary19A-6), this protein is Coproporphyrin III ferrochelatase.